The primary structure comprises 202 residues: NAD(P)H dehydrogenase (quinone) 2 (202 aa).

Positions 4–190 (VLVLYYSSYG…AGAFHQGEIV (187 aa)) constitute a Flavodoxin-like domain. FMN-binding positions include 10–15 (SSYGHI) and 78–80 (TRF). Tyr-12 contacts NAD(+). Residue Trp-98 participates in substrate binding. FMN is bound by residues 113 to 119 (STGTQHG) and His-134.

This sequence belongs to the WrbA family. Requires FMN as cofactor.

The catalysed reaction is a quinone + NADH + H(+) = a quinol + NAD(+). The enzyme catalyses a quinone + NADPH + H(+) = a quinol + NADP(+). The sequence is that of NAD(P)H dehydrogenase (quinone) 2 from Rhizobium meliloti (strain 1021) (Ensifer meliloti).